Here is a 458-residue protein sequence, read N- to C-terminus: ATP synthase subunit beta (458 aa).

148–155 (GGAGVGKT) serves as a coordination point for ATP.

The protein belongs to the ATPase alpha/beta chains family. F-type ATPases have 2 components, CF(1) - the catalytic core - and CF(0) - the membrane proton channel. CF(1) has five subunits: alpha(3), beta(3), gamma(1), delta(1), epsilon(1). CF(0) has three main subunits: a(1), b(2) and c(9-12). The alpha and beta chains form an alternating ring which encloses part of the gamma chain. CF(1) is attached to CF(0) by a central stalk formed by the gamma and epsilon chains, while a peripheral stalk is formed by the delta and b chains.

It localises to the cell inner membrane. The catalysed reaction is ATP + H2O + 4 H(+)(in) = ADP + phosphate + 5 H(+)(out). In terms of biological role, produces ATP from ADP in the presence of a proton gradient across the membrane. The catalytic sites are hosted primarily by the beta subunits. The chain is ATP synthase subunit beta from Stutzerimonas stutzeri (strain A1501) (Pseudomonas stutzeri).